Reading from the N-terminus, the 64-residue chain is Lantipeptide Flvbeta.d (64 aa).

Residues 1-31 (MDNNTEKFNELAAIADESELNEMLDENITGA) constitute a propeptide, cleaved by FlvT. A cross-link (lanthionine (Ser-Cys); by FlvM2) is located at residues 33–37 (STIQC). 2 positions are modified to 2,3-didehydrobutyrine; by FlvM2: Thr-34 and Thr-41. 3 consecutive cross-links (beta-methyllanthionine (Thr-Cys); by FlvM2) follow at residues 44 to 52 (TILSVVFDC), 55 to 58 (TSAC), and 59 to 62 (TPPC). Positions 47–53 (SVVFDCC) form a cross-link, lanthionine (Ser-Cys); by FlvM2.

Contains LL-lanthionine, DL-lanthionine, and DL-beta-methyllanthionine, when coepressed in E.coli with the flavecin synthetase FlvM2.

Its subcellular location is the secreted. Functionally, lanthionine-containing peptide that does probably not show antibacterial activity, since its analog [+2]Flvbeta.d does not show antibacterial activity against M.luteus. Also does not show antibiotic activity when tested with [Del2]Flvalpha.a, an analog of Flvalpha.a, which is encoded by the same operon than Flvbeta.d. The bactericidal activity of lantibiotics is based on depolarization of energized bacterial cytoplasmic membranes, initiated by the formation of aqueous transmembrane pores. The sequence is that of Lantipeptide Flvbeta.d from Ruminococcus flavefaciens.